We begin with the raw amino-acid sequence, 30 residues long: Putative cytochrome bd-II ubiquinol oxidase subunit AppX (30 aa).

The chain crosses the membrane as a helical span at residues 4–24 (LLWFVGILLMCSLSTLVLVWL).

Belongs to the cytochrome ubiquinol oxidase subunit X family. As to quaternary structure, able to interact with CydA and CydB upon overexpression.

It is found in the cell inner membrane. In terms of biological role, might be part of cytochrome bd-II oxidase (appB and appC). Able to restore reductant resistance to a cydX deletion mutant upon overexpression. CydX and this protein may have some functional overlap. This chain is Putative cytochrome bd-II ubiquinol oxidase subunit AppX (appX), found in Escherichia coli (strain K12).